The following is a 234-amino-acid chain: tRNA1(Val) (adenine(37)-N6)-methyltransferase (234 aa).

The protein belongs to the methyltransferase superfamily. tRNA (adenine-N(6)-)-methyltransferase family.

Its subcellular location is the cytoplasm. The catalysed reaction is adenosine(37) in tRNA1(Val) + S-adenosyl-L-methionine = N(6)-methyladenosine(37) in tRNA1(Val) + S-adenosyl-L-homocysteine + H(+). Its function is as follows. Specifically methylates the adenine in position 37 of tRNA(1)(Val) (anticodon cmo5UAC). This chain is tRNA1(Val) (adenine(37)-N6)-methyltransferase, found in Flavobacterium psychrophilum (strain ATCC 49511 / DSM 21280 / CIP 103535 / JIP02/86).